Consider the following 395-residue polypeptide: Ribosomal RNA small subunit methyltransferase H (395 aa).

Residues 101-103 (GGH), aspartate 120, tyrosine 147, aspartate 171, and glutamine 178 contribute to the S-adenosyl-L-methionine site.

The protein belongs to the methyltransferase superfamily. RsmH family.

The protein localises to the cytoplasm. It carries out the reaction cytidine(1402) in 16S rRNA + S-adenosyl-L-methionine = N(4)-methylcytidine(1402) in 16S rRNA + S-adenosyl-L-homocysteine + H(+). Its function is as follows. Specifically methylates the N4 position of cytidine in position 1402 (C1402) of 16S rRNA. The sequence is that of Ribosomal RNA small subunit methyltransferase H from Mycobacterium ulcerans (strain Agy99).